Here is a 968-residue protein sequence, read N- to C-terminus: Phosphoenolpyruvate carboxylase (968 aa).

S11 is modified (phosphoserine). Catalysis depends on residues H172 and K602.

It belongs to the PEPCase type 1 family. As to quaternary structure, homotetramer. Mg(2+) serves as cofactor.

Its subcellular location is the cytoplasm. The enzyme catalyses oxaloacetate + phosphate = phosphoenolpyruvate + hydrogencarbonate. By light-reversible phosphorylation. In terms of biological role, through the carboxylation of phosphoenolpyruvate (PEP) it forms oxaloacetate, a four-carbon dicarboxylic acid source for the tricarboxylic acid cycle. This Phaseolus vulgaris (Kidney bean) protein is Phosphoenolpyruvate carboxylase.